We begin with the raw amino-acid sequence, 86 residues long: Small ribosomal subunit protein uS17 (86 aa).

Belongs to the universal ribosomal protein uS17 family. Part of the 30S ribosomal subunit.

Functionally, one of the primary rRNA binding proteins, it binds specifically to the 5'-end of 16S ribosomal RNA. The protein is Small ribosomal subunit protein uS17 of Halalkalibacterium halodurans (strain ATCC BAA-125 / DSM 18197 / FERM 7344 / JCM 9153 / C-125) (Bacillus halodurans).